A 238-amino-acid polypeptide reads, in one-letter code: Ribonuclease PH (238 aa).

Residues R86 and 124 to 126 (GTR) each bind phosphate.

It belongs to the RNase PH family. As to quaternary structure, homohexameric ring arranged as a trimer of dimers.

It catalyses the reaction tRNA(n+1) + phosphate = tRNA(n) + a ribonucleoside 5'-diphosphate. Phosphorolytic 3'-5' exoribonuclease that plays an important role in tRNA 3'-end maturation. Removes nucleotide residues following the 3'-CCA terminus of tRNAs; can also add nucleotides to the ends of RNA molecules by using nucleoside diphosphates as substrates, but this may not be physiologically important. Probably plays a role in initiation of 16S rRNA degradation (leading to ribosome degradation) during starvation. This is Ribonuclease PH from Caulobacter vibrioides (strain ATCC 19089 / CIP 103742 / CB 15) (Caulobacter crescentus).